The following is a 232-amino-acid chain: Orotidine 5'-phosphate decarboxylase (232 aa).

Residues aspartate 10, lysine 32, 59–68 (DLKFHDIPNT), threonine 119, arginine 180, glutamine 189, glycine 209, and arginine 210 contribute to the substrate site. The active-site Proton donor is the lysine 61.

It belongs to the OMP decarboxylase family. Type 1 subfamily. In terms of assembly, homodimer.

It catalyses the reaction orotidine 5'-phosphate + H(+) = UMP + CO2. It functions in the pathway pyrimidine metabolism; UMP biosynthesis via de novo pathway; UMP from orotate: step 2/2. In terms of biological role, catalyzes the decarboxylation of orotidine 5'-monophosphate (OMP) to uridine 5'-monophosphate (UMP). This Actinobacillus succinogenes (strain ATCC 55618 / DSM 22257 / CCUG 43843 / 130Z) protein is Orotidine 5'-phosphate decarboxylase.